The sequence spans 451 residues: DNA polymerase delta subunit 3 (451 aa).

Disordered stretches follow at residues 187–241 (SQAK…AASS), 259–386 (KQTP…KVLR), and 404–451 (AWES…FAKK). Residues 200-216 (PSTSQVKEAPKASQTVE) show a composition bias toward polar residues. The span at 225–241 (SAPAKKGSSAPKSAASS) shows a compositional bias: low complexity. The segment covering 306–316 (QREEELRRMME) has biased composition (basic and acidic residues). Acidic residues predominate over residues 329–353 (EEEEEEEEEEESEHEQLPAEEEPMA). Over residues 354–366 (EEPKAPEPVKEEP) the composition is skewed to basic and acidic residues. The span at 376–386 (GRRRGKRKVLR) shows a compositional bias: basic residues. Positions 441–448 (QGSIMSWF) match the PIP-box motif.

In terms of assembly, component of the DNA polymerase delta complex which consists of PolD1, PolD2, PolD3 and PolD4, with PolD1 bearing DNA polymerase and 3' to 5' proofreading exonuclease activities. Directly interacts with PCNA.

It is found in the nucleus. Its function is as follows. Accessory component of the DNA polymerase delta complex. The complex is required for the maintenance of genome integrity, acting in concert with the sliding clamp processivity factor PCNA. In Chaetomium thermophilum (strain DSM 1495 / CBS 144.50 / IMI 039719) (Thermochaetoides thermophila), this protein is DNA polymerase delta subunit 3.